A 319-amino-acid chain; its full sequence is Beta-ketoacyl-[acyl-carrier-protein] synthase III (319 aa).

Residues cysteine 112 and histidine 246 contribute to the active site. The tract at residues glutamine 247–arginine 251 is ACP-binding. The active site involves asparagine 276.

It belongs to the thiolase-like superfamily. FabH family. In terms of assembly, homodimer.

It is found in the cytoplasm. It carries out the reaction malonyl-[ACP] + acetyl-CoA + H(+) = 3-oxobutanoyl-[ACP] + CO2 + CoA. Its pathway is lipid metabolism; fatty acid biosynthesis. Catalyzes the condensation reaction of fatty acid synthesis by the addition to an acyl acceptor of two carbons from malonyl-ACP. Catalyzes the first condensation reaction which initiates fatty acid synthesis and may therefore play a role in governing the total rate of fatty acid production. Possesses both acetoacetyl-ACP synthase and acetyl transacylase activities. Its substrate specificity determines the biosynthesis of branched-chain and/or straight-chain of fatty acids. The polypeptide is Beta-ketoacyl-[acyl-carrier-protein] synthase III (Psychromonas ingrahamii (strain DSM 17664 / CCUG 51855 / 37)).